Reading from the N-terminus, the 254-residue chain is Alcohol dehydrogenase (254 aa).

Position 10-33 (10-33 (FVAGLGGIGLDTSREIVKSGPKNL)) interacts with NAD(+). S138 is a substrate binding site. Y151 serves as the catalytic Proton acceptor.

Belongs to the short-chain dehydrogenases/reductases (SDR) family. Homodimer.

It catalyses the reaction a primary alcohol + NAD(+) = an aldehyde + NADH + H(+). The enzyme catalyses a secondary alcohol + NAD(+) = a ketone + NADH + H(+). The polypeptide is Alcohol dehydrogenase (Adh) (Drosophila differens (Fruit fly)).